The following is a 221-amino-acid chain: Aspartic protease inhibitor 1 (221 aa).

The first 23 residues, 1–23, serve as a signal peptide directing secretion; that stretch reads MMKCLFFLCLCLFPILVFSSTFT. Positions 24 to 32 are excised as a propeptide; the sequence is SQNPINLPS. A Vacuolar targeting signal motif is present at residues 26-31; sequence NPINLP. N-linked (GlcNAc...) asparagine glycosylation is present at N51. Cystine bridges form between C80–C125 and C174–C186.

This sequence belongs to the protease inhibitor I3 (leguminous Kunitz-type inhibitor) family. Tubers, young leaves and flower bud. Not detected in root, stem or mature leaves.

It is found in the vacuole. In terms of biological role, inhibitor of cathepsin D (aspartic protease). May also inhibit trypsin and chymotrypsin (serine proteases). Protects the plant by inhibiting proteases of invading organisms. This chain is Aspartic protease inhibitor 1, found in Solanum tuberosum (Potato).